The primary structure comprises 875 residues: DNA gyrase subunit A (875 aa).

A Topo IIA-type catalytic domain is found at 34–533 (LPDVRDGLKP…NSADINLEDL (500 aa)). The O-(5'-phospho-DNA)-tyrosine intermediate role is filled by Tyr122. Positions 560–566 (QRRGGKG) match the GyrA-box motif. A disordered region spans residues 841–875 (EPVDEEDLDTIDGSAAEGDDEIAPEVDVDDEPEEE). The segment covering 857 to 875 (EGDDEIAPEVDVDDEPEEE) has biased composition (acidic residues).

This sequence belongs to the type II topoisomerase GyrA/ParC subunit family. In terms of assembly, heterotetramer, composed of two GyrA and two GyrB chains. In the heterotetramer, GyrA contains the active site tyrosine that forms a transient covalent intermediate with DNA, while GyrB binds cofactors and catalyzes ATP hydrolysis.

It localises to the cytoplasm. It carries out the reaction ATP-dependent breakage, passage and rejoining of double-stranded DNA.. In terms of biological role, a type II topoisomerase that negatively supercoils closed circular double-stranded (ds) DNA in an ATP-dependent manner to modulate DNA topology and maintain chromosomes in an underwound state. Negative supercoiling favors strand separation, and DNA replication, transcription, recombination and repair, all of which involve strand separation. Also able to catalyze the interconversion of other topological isomers of dsDNA rings, including catenanes and knotted rings. Type II topoisomerases break and join 2 DNA strands simultaneously in an ATP-dependent manner. In Shigella flexneri, this protein is DNA gyrase subunit A.